Reading from the N-terminus, the 337-residue chain is Ornithine carbamoyltransferase (337 aa).

Carbamoyl phosphate contacts are provided by residues 56 to 59 (STRT), Gln83, Arg107, and 134 to 137 (HPTQ). L-ornithine contacts are provided by residues Asn168, Asp232, and 236–237 (SM). Carbamoyl phosphate-binding positions include 274–275 (CL) and Arg320.

The protein belongs to the aspartate/ornithine carbamoyltransferase superfamily. OTCase family.

The protein resides in the cytoplasm. It carries out the reaction carbamoyl phosphate + L-ornithine = L-citrulline + phosphate + H(+). It participates in amino-acid biosynthesis; L-arginine biosynthesis; L-arginine from L-ornithine and carbamoyl phosphate: step 1/3. Reversibly catalyzes the transfer of the carbamoyl group from carbamoyl phosphate (CP) to the N(epsilon) atom of ornithine (ORN) to produce L-citrulline. The protein is Ornithine carbamoyltransferase (argI) of Shigella flexneri.